Reading from the N-terminus, the 557-residue chain is Formate--tetrahydrofolate ligase (557 aa).

Residue 65 to 72 (TPAGEGKT) coordinates ATP.

The protein belongs to the formate--tetrahydrofolate ligase family.

The enzyme catalyses (6S)-5,6,7,8-tetrahydrofolate + formate + ATP = (6R)-10-formyltetrahydrofolate + ADP + phosphate. It functions in the pathway one-carbon metabolism; tetrahydrofolate interconversion. The polypeptide is Formate--tetrahydrofolate ligase (Acidiphilium cryptum (strain JF-5)).